We begin with the raw amino-acid sequence, 503 residues long: MEEFKRYLELDRSQQHDFVYPLIFQEYIYALAHDHGLNRSILLENTGYDNKSSLLIVKRLITQMYQRNHLIFCANDFNQNPFFGHNTNVYSQMVLEGFAVLVEIPFSLRLISSLKGKEIVKSHNLRSIHSIFPFLEDKFSHLNYVLDILIPHSIHLEVLVQTLRYWVKDVSSLHLLRFFLHEYRNWNSLITPKKSSFSFSKRNQRLVLFLYNSHVCEYESIFVFXRXQSSHLRSISSGTFLERIYFYGKIEHFVEVFTKDFKAILWLFKDPFMHYVRYQGKFLLASKGTSLLMNKWKYYLVNFWQCYFYMWSQPGRIHRNHLSNHSLDFLGYLSSVRLNPSIVRSQMLENSFLIGNAIKKYDPIVPIIPLMGSLSKAKFCNVLGHPISKPVWSDLSDSDIIDRFGRIYRNLSHYYSGSSKKMSLYRIKYILRLSCARTLARKHKSTVRAFLKRLGSGLLEEFFTEEEQVFSLTFPKASFTSRGLYRRRIWYLDIICINDLANH.

Belongs to the intron maturase 2 family. MatK subfamily.

It is found in the plastid. The protein resides in the chloroplast. Usually encoded in the trnK tRNA gene intron. Probably assists in splicing its own and other chloroplast group II introns. In Diospyros virginiana (American persimmon), this protein is Maturase K.